We begin with the raw amino-acid sequence, 573 residues long: Protein FAM200A (573 aa).

Residues 1–51 (MTPESRDTTDLSPGGTQEMEGIVIVKVEEEDEEDHFQKERNKVESSPQVLS) form a disordered region. The Extracellular segment spans residues 1–513 (MTPESRDTTD…DDFPLLSRKS (513 aa)). Residues 514–533 (ILLLLPFTTTYLCELGFSIL) traverse the membrane as a helical segment. Over 534 to 573 (TRLKTKKRNRLNSAPDMRVALSSCVPDWKELMNRQAHPSH) the chain is Cytoplasmic.

It belongs to the FAM200 family.

The protein resides in the membrane. The polypeptide is Protein FAM200A (FAM200A) (Homo sapiens (Human)).